The chain runs to 357 residues: Inner membrane protein YcfT (357 aa).

Residues 1-12 are Cytoplasmic-facing; that stretch reads MKQKELWINQIK. A helical transmembrane segment spans residues 13–33; it reads GLCICLVVIYHSVITFYPHLT. The Periplasmic portion of the chain corresponds to 34-49; sequence TFQHPLSEVLSKCWIY. The chain crosses the membrane as a helical span at residues 50–70; that stretch reads FNLYLAPFRMPVFFFISGYLI. Over 71 to 86 the chain is Cytoplasmic; the sequence is RRYIDSVPWGNCLDKR. Residues 87-107 traverse the membrane as a helical segment; sequence IWNIFWVLALWGVVQWLALSA. Residues 108 to 135 lie on the Periplasmic side of the membrane; the sequence is LNQWLAPERDLSNASNAAYADSTGEFLH. A helical membrane pass occupies residues 136–156; sequence GMITASTSLWYLYALIVYFVV. At 157–162 the chain is on the cytoplasmic side; the sequence is CKIFSR. Residues 163–183 form a helical membrane-spanning segment; the sequence is LALPLFALFVLLSVAVNFVPT. Over 184-196 the chain is Periplasmic; sequence PWWGMNSVIRNLP. Residues 197–217 traverse the membrane as a helical segment; sequence YYSLGAWFGATIMTCVKEVPL. Residues 218-231 are Cytoplasmic-facing; it reads RRHLLMASLLTVLA. Residues 232 to 252 traverse the membrane as a helical segment; sequence VGAWLFTISLLLSLVSIVVIM. Residues 253–310 lie on the Periplasmic side of the membrane; that stretch reads KLFYQYEQRFGMRSTSLLNVIGSNTIAIYTTHRILVEIFSLTLLAQMNAARWSPQVEL. Residues 311-331 traverse the membrane as a helical segment; it reads TLLLVYPFVSLFICTVAGLLV. The Cytoplasmic portion of the chain corresponds to 332-357; sequence RKLSQRAFSDLLFSPPSLPAAVSYSR.

The protein belongs to the acyltransferase 3 family.

The protein resides in the cell inner membrane. The chain is Inner membrane protein YcfT (ycfT) from Escherichia coli (strain K12).